The primary structure comprises 91 residues: Small ribosomal subunit protein uS15 (91 aa).

This sequence belongs to the universal ribosomal protein uS15 family. As to quaternary structure, part of the 30S ribosomal subunit. Forms a bridge to the 50S subunit in the 70S ribosome, contacting the 23S rRNA.

In terms of biological role, one of the primary rRNA binding proteins, it binds directly to 16S rRNA where it helps nucleate assembly of the platform of the 30S subunit by binding and bridging several RNA helices of the 16S rRNA. Functionally, forms an intersubunit bridge (bridge B4) with the 23S rRNA of the 50S subunit in the ribosome. This chain is Small ribosomal subunit protein uS15, found in Nautilia profundicola (strain ATCC BAA-1463 / DSM 18972 / AmH).